Reading from the N-terminus, the 426-residue chain is Enolase (426 aa).

Position 163 (Gln163) interacts with (2R)-2-phosphoglycerate. Residue Glu205 is the Proton donor of the active site. Mg(2+) contacts are provided by Asp242, Glu285, and Asp312. (2R)-2-phosphoglycerate-binding residues include Lys337, Arg366, Ser367, and Lys388. The active-site Proton acceptor is the Lys337.

It belongs to the enolase family. Mg(2+) is required as a cofactor.

The protein localises to the cytoplasm. It is found in the secreted. It localises to the cell surface. It carries out the reaction (2R)-2-phosphoglycerate = phosphoenolpyruvate + H2O. It participates in carbohydrate degradation; glycolysis; pyruvate from D-glyceraldehyde 3-phosphate: step 4/5. In terms of biological role, catalyzes the reversible conversion of 2-phosphoglycerate (2-PG) into phosphoenolpyruvate (PEP). It is essential for the degradation of carbohydrates via glycolysis. In Caulobacter vibrioides (strain ATCC 19089 / CIP 103742 / CB 15) (Caulobacter crescentus), this protein is Enolase.